Reading from the N-terminus, the 198-residue chain is ATP-dependent Clp protease proteolytic subunit (198 aa).

The active-site Nucleophile is the S102. H127 is an active-site residue.

The protein belongs to the peptidase S14 family. Fourteen ClpP subunits assemble into 2 heptameric rings which stack back to back to give a disk-like structure with a central cavity, resembling the structure of eukaryotic proteasomes.

It is found in the cytoplasm. The catalysed reaction is Hydrolysis of proteins to small peptides in the presence of ATP and magnesium. alpha-casein is the usual test substrate. In the absence of ATP, only oligopeptides shorter than five residues are hydrolyzed (such as succinyl-Leu-Tyr-|-NHMec, and Leu-Tyr-Leu-|-Tyr-Trp, in which cleavage of the -Tyr-|-Leu- and -Tyr-|-Trp bonds also occurs).. Its function is as follows. Cleaves peptides in various proteins in a process that requires ATP hydrolysis. Has a chymotrypsin-like activity. Plays a major role in the degradation of misfolded proteins. The chain is ATP-dependent Clp protease proteolytic subunit from Brachyspira hyodysenteriae (strain ATCC 49526 / WA1).